A 398-amino-acid chain; its full sequence is cAMP-dependent protein kinase, catalytic subunit-like (398 aa).

The Protein kinase domain maps to 90 to 344 (LERIITIGKG…TQDVKDHKWF (255 aa)). ATP is bound by residues 96 to 104 (IGKGTFGRV) and lysine 119. Residue aspartate 213 is the Proton acceptor of the active site. An AGC-kinase C-terminal domain is found at 345 to 398 (EKVNWDDTLHLRVEPPIVPTLYHPGDTGNFDDYEEDTTGGPLCSQRDRDLFAEW).

It belongs to the protein kinase superfamily. Ser/Thr protein kinase family. cAMP subfamily.

The catalysed reaction is L-seryl-[protein] + ATP = O-phospho-L-seryl-[protein] + ADP + H(+). It catalyses the reaction L-threonyl-[protein] + ATP = O-phospho-L-threonyl-[protein] + ADP + H(+). This Caenorhabditis elegans protein is cAMP-dependent protein kinase, catalytic subunit-like.